The chain runs to 266 residues: Calpain small subunit 1 (266 aa).

Position 1 is an N-acetylmethionine (M1). S6 bears the Phosphoserine mark. The EF-hand 1; atypical domain occupies 94–128 (EEVRQFRRLFAQLAGDDMEVSATELMNILNKVVTR). Ca(2+) is bound by residues A107, D110, E112, E117, D135, D150, D152, T154, K156, and E161. 4 consecutive EF-hand domains span residues 137-170 (FGID…NNIK), 167-202 (NNIK…AGFH), 203-231 (LNEH…ISCL), and 232-266 (VRLD…TMYS). K177 is modified (N6-acetyllysine). Ca(2+)-binding residues include D180, D182, S184, T186, E191, and D223.

Homodimer or heterodimer of a large (catalytic) and a small (regulatory) subunit. In presence of calcium, the heterodimer dissociates.

The protein resides in the cytoplasm. It is found in the cell membrane. Its function is as follows. Regulatory subunit of the calcium-regulated non-lysosomal thiol-protease which catalyzes limited proteolysis of substrates involved in cytoskeletal remodeling and signal transduction. Essential for embryonic development. The polypeptide is Calpain small subunit 1 (CAPNS1) (Sus scrofa (Pig)).